A 204-amino-acid chain; its full sequence is Small ribosomal subunit protein uS4 (204 aa).

An S4 RNA-binding domain is found at 93-156 (SRLSSVLYHS…AKIPVIVEAV (64 aa)).

Belongs to the universal ribosomal protein uS4 family. In terms of assembly, part of the 30S ribosomal subunit. Contacts protein S5. The interaction surface between S4 and S5 is involved in control of translational fidelity.

In terms of biological role, one of the primary rRNA binding proteins, it binds directly to 16S rRNA where it nucleates assembly of the body of the 30S subunit. With S5 and S12 plays an important role in translational accuracy. In Wolbachia sp. subsp. Brugia malayi (strain TRS), this protein is Small ribosomal subunit protein uS4.